The following is a 515-amino-acid chain: Endoglucanase 23 (515 aa).

The N-terminal stretch at 1–29 (MALLSAPVRRRRSRVRVLLVCCCLLLALA) is a signal peptide. Asp95 serves as the catalytic Nucleophile. Residues Asn178, Asn375, and Asn384 are each glycosylated (N-linked (GlcNAc...) asparagine). His426 is a catalytic residue. Asn452 carries N-linked (GlcNAc...) asparagine glycosylation. Active-site residues include Asp477 and Glu486.

The protein belongs to the glycosyl hydrolase 9 (cellulase E) family.

The protein localises to the secreted. It catalyses the reaction Endohydrolysis of (1-&gt;4)-beta-D-glucosidic linkages in cellulose, lichenin and cereal beta-D-glucans.. This is Endoglucanase 23 (GLU12) from Oryza sativa subsp. japonica (Rice).